The chain runs to 875 residues: Alanine--tRNA ligase (875 aa).

Positions 563, 567, 665, and 669 each coordinate Zn(2+).

It belongs to the class-II aminoacyl-tRNA synthetase family. Zn(2+) serves as cofactor.

Its subcellular location is the cytoplasm. The catalysed reaction is tRNA(Ala) + L-alanine + ATP = L-alanyl-tRNA(Ala) + AMP + diphosphate. Its function is as follows. Catalyzes the attachment of alanine to tRNA(Ala) in a two-step reaction: alanine is first activated by ATP to form Ala-AMP and then transferred to the acceptor end of tRNA(Ala). Also edits incorrectly charged Ser-tRNA(Ala) and Gly-tRNA(Ala) via its editing domain. The sequence is that of Alanine--tRNA ligase from Shewanella pealeana (strain ATCC 700345 / ANG-SQ1).